Reading from the N-terminus, the 126-residue chain is uncharacterized protein (126 aa).

2 disordered regions span residues 15 to 72 and 93 to 126; these read PEWG…SDPQ and TQIP…TTSN. 2 stretches are compositionally biased toward basic and acidic residues: residues 29-46 and 55-64; these read DPLD…RVPE and VQEDSREHGQ.

This is an uncharacterized protein from Homo sapiens (Human).